The sequence spans 401 residues: Putative TRAP transporter large permease protein HI_0050 (401 aa).

A run of 11 helical transmembrane segments spans residues phenylalanine 31–isoleucine 51, leucine 70–alanine 90, glycine 115–isoleucine 135, isoleucine 144–valine 164, alanine 193–threonine 213, alanine 217–phenylalanine 237, methionine 253–isoleucine 273, isoleucine 290–proline 310, isoleucine 330–valine 350, valine 353–alanine 373, and phenylalanine 375–valine 395.

Belongs to the TRAP transporter large permease family.

It localises to the cell inner membrane. The protein is Putative TRAP transporter large permease protein HI_0050 of Haemophilus influenzae (strain ATCC 51907 / DSM 11121 / KW20 / Rd).